Here is a 417-residue protein sequence, read N- to C-terminus: Hydrogen cyanide synthase subunit HcnC (417 aa).

An N-terminal signal peptide occupies residues 1–18; that stretch reads MNRTYDIVIAGGGVIGAS. FAD is bound at residue 7 to 21; the sequence is IVIAGGGVIGASCAY. Residue Cys19 is the site of N-palmitoyl cysteine attachment. Cys19 carries S-diacylglycerol cysteine lipidation. The helical transmembrane segment at 46 to 66 threads the bilayer; the sequence is SAGGLWAIGESVGLGCGVIFF.

This sequence belongs to the FAD-dependent glycerol-3-phosphate dehydrogenase family. Heterotrimer of HcnA, HcnB and HcnC. FAD is required as a cofactor.

It is found in the cell membrane. It catalyses the reaction glycine + 2 A = hydrogen cyanide + 2 AH2 + CO2. Oxygen is necessary for cyanogenesis. Activated by succinate, glycine methyl ester, glucose and D,L-methionine in addition to glycine. Phenazine methosulfate, methylene blue, 2,6-dichlorophenolindophenol (DCIP) and ferricyanide can replace oxygen for the reaction. Inhibited by pyrrolnitrin and acriflavine at 1 mM concentration. Functionally, a three-component membrane-bound flavoenzyme that catalyzes the formation of hydrogen cyanide, a secondary metabolite, by transfer of electrons to a cyanide-resistant branch of the aerobic respiratory chain. The sequence is that of Hydrogen cyanide synthase subunit HcnC from Pseudomonas aeruginosa (strain ATCC 15692 / DSM 22644 / CIP 104116 / JCM 14847 / LMG 12228 / 1C / PRS 101 / PAO1).